The chain runs to 381 residues: Alkanesulfonate monooxygenase (381 aa).

Belongs to the SsuD family. In terms of assembly, homotetramer.

It carries out the reaction an alkanesulfonate + FMNH2 + O2 = an aldehyde + FMN + sulfite + H2O + 2 H(+). In terms of biological role, catalyzes the desulfonation of aliphatic sulfonates. This Escherichia coli (strain SE11) protein is Alkanesulfonate monooxygenase.